A 295-amino-acid polypeptide reads, in one-letter code: Secreted frizzled-related protein 2 (295 aa).

An N-terminal signal peptide occupies residues 1–24 (MLQGPGSLLLLFLASHCCLGSARG). The region spanning 35-155 (YKRSNCKPIP…PQDNDLCIPL (121 aa)) is the FZ domain. 8 cysteine pairs are disulfide-bonded: C40-C103, C50-C96, C87-C125, C114-C152, C118-C142, C172-C245, C175-C247, and C190-C295. An NTR domain is found at 172–295 (CEACKNKNDD…ISRSIRKLQC (124 aa)).

The protein belongs to the secreted frizzled-related protein (sFRP) family. In terms of tissue distribution, expressed in adipose tissue, heart, brain, skeletal muscle, pancreas, thymus, prostate, testis, ovary, small intestine and colon. Highest levels in adipose tissue, small intestine and colon.

The protein resides in the secreted. Its function is as follows. Soluble frizzled-related proteins (sFRPS) function as modulators of Wnt signaling through direct interaction with Wnts. They have a role in regulating cell growth and differentiation in specific cell types. SFRP2 may be important for eye retinal development and for myogenesis. The chain is Secreted frizzled-related protein 2 (SFRP2) from Homo sapiens (Human).